Consider the following 154-residue polypeptide: Putative pre-16S rRNA nuclease (154 aa).

The protein belongs to the YqgF nuclease family.

It localises to the cytoplasm. In terms of biological role, could be a nuclease involved in processing of the 5'-end of pre-16S rRNA. The chain is Putative pre-16S rRNA nuclease from Rickettsia bellii (strain OSU 85-389).